The following is a 594-amino-acid chain: MADLLSSLKNLSNGSGVYQYFDKNRQLLYIGKAKNLKKRIKSYFSIHNNEITPNHRTSLRIQMMVKQIAFLETILVENEQDALILENSLIKQLKPKYNILLRDDKTYPYIYMDFSTDFPIPLITRKILKQLGVKYFGPFTSGAKDILDSLYELLPLVQKKNCIKDKKACMFYQIERCKAPCENKITKEEYLKIAKECLEMIENKDKLIKELQLKMDRLSSNLRFEEALIYRDRISKIQKIAPFTCMDLAKLYDLDIFAFYGKNNRAVLVKMFMRGGKIISSAFEKIHSLNGFDADEAMKQAIINHYQSHLPLMPEQILLNACSNETLKELQEFIYHKHSKKITLNIPKKGDKLALIEIAMKNAQEIFSQEKTSNEEEILEEVRSLLNLECVPYRVEIFDTSHHANSQCVGGMVVYENSAFQKNSYRRYHLKGSNEYAQMSELLTRRALDFAKEPPPNLWVIDGGRVQLNIALETLKSSGSFVEVIAISKEKRDSKAYRSKGGAKDIIHTMSDTFKLLPSDKRLQWVQKLRDESHRYAINFHRSTKIKNMKQIALLKEKGIGEASVKKLLDYFGSFEAIEKASEQEKNAVLKKRN.

Residues 13–99 enclose the GIY-YIG domain; sequence NGSGVYQYFD…IKQLKPKYNI (87 aa). In terms of domain architecture, UVR spans 205-240; that stretch reads DKLIKELQLKMDRLSSNLRFEEALIYRDRISKIQKI.

It belongs to the UvrC family. Interacts with UvrB in an incision complex.

It localises to the cytoplasm. In terms of biological role, the UvrABC repair system catalyzes the recognition and processing of DNA lesions. UvrC both incises the 5' and 3' sides of the lesion. The N-terminal half is responsible for the 3' incision and the C-terminal half is responsible for the 5' incision. The chain is UvrABC system protein C from Helicobacter acinonychis (strain Sheeba).